A 145-amino-acid chain; its full sequence is Large ribosomal subunit protein bL17 (145 aa).

This sequence belongs to the bacterial ribosomal protein bL17 family. In terms of assembly, part of the 50S ribosomal subunit. Contacts protein L32.

This Francisella tularensis subsp. tularensis (strain FSC 198) protein is Large ribosomal subunit protein bL17.